The primary structure comprises 263 residues: MARRPLVMGNWKLNGSKAFTKELIEGLKAELHDVTGCDVAIAPPVMYLGTAEAALSGCGCSCGGKSVIQLGAQNVDINVKGAFTGDISTEMLKDFGAKYIIIGHSERRTYHKESDEFVAKKFGALKEAGLVPVLCIGESEAENEAGKTEEVCARQIDAVINALGVEAFNGAVIAYEPIWAIGTGKSATPAQAQAVHAFIRGHIAAKSQAVAEQVIIQYGGSVNDANAAELFTQPDIDGALVGGASLKAPAFAVIVKAAAAAKN.

Position 10–12 (10–12 (NWK)) interacts with substrate. The Electrophile role is filled by H104. E176 (proton acceptor) is an active-site residue. Substrate is bound by residues G182, S221, and 242 to 243 (GG).

Belongs to the triosephosphate isomerase family. In terms of assembly, homodimer.

It is found in the cytoplasm. It catalyses the reaction D-glyceraldehyde 3-phosphate = dihydroxyacetone phosphate. Its pathway is carbohydrate biosynthesis; gluconeogenesis. It functions in the pathway carbohydrate degradation; glycolysis; D-glyceraldehyde 3-phosphate from glycerone phosphate: step 1/1. Its function is as follows. Involved in the gluconeogenesis. Catalyzes stereospecifically the conversion of dihydroxyacetone phosphate (DHAP) to D-glyceraldehyde-3-phosphate (G3P). This is Triosephosphate isomerase from Haemophilus influenzae (strain ATCC 51907 / DSM 11121 / KW20 / Rd).